The chain runs to 582 residues: MITRMSQLFLRTLRDDPADAEVPSHKLLIRAGYIRPVAPGLYSWLPLGLRVLRRIEHIVREEMNAIGGQEILFPALLPRAPYEATNRWTEYGDSVFRLQDRRGNDYLLGPTHEELFTLTVKGEYSSYKDFPVLLYQIQNKYRDEARPRAGILRVREFVMKDSYSFDIDDAGLKAAYHAHREAYQRIFARLQVRYVIVSAVSGAMGGSASEEFLAESPVGEDTFVRCLESGYAANVEAVITARPDPQPVEGLPEAVVHDTGDTPTIATLVDWANRAGLGRTVTAADTLKNVLLKVRQPGGDWELLAIGLPGDREVDDKRLGAALEPAEYVLLDDADFARYPFLVKGYIGPKALKDNGVRYLVDPRVVDGTSWITGADEPGRHVVGLVAGRDFTADGTIEAAEVRDGDPSPDGAGPLVSARGIEVAHIFQLGRKYTDAFTADVLGEDGKPVRLTMGSYGLGVSRMVAVIAEQHHDELGLRWPASVAPFDVHLVIANKDAQARAGATALADDLDRLGVEVLLDDRQASPGVKFKDAELLGVPWIVVVGRGWADGVVELRDRFAGQTRELATGPSLAADIAAALRG.

Belongs to the class-II aminoacyl-tRNA synthetase family. ProS type 1 subfamily. As to quaternary structure, homodimer.

It is found in the cytoplasm. It catalyses the reaction tRNA(Pro) + L-proline + ATP = L-prolyl-tRNA(Pro) + AMP + diphosphate. Catalyzes the attachment of proline to tRNA(Pro) in a two-step reaction: proline is first activated by ATP to form Pro-AMP and then transferred to the acceptor end of tRNA(Pro). As ProRS can inadvertently accommodate and process non-cognate amino acids such as alanine and cysteine, to avoid such errors it has two additional distinct editing activities against alanine. One activity is designated as 'pretransfer' editing and involves the tRNA(Pro)-independent hydrolysis of activated Ala-AMP. The other activity is designated 'posttransfer' editing and involves deacylation of mischarged Ala-tRNA(Pro). The misacylated Cys-tRNA(Pro) is not edited by ProRS. The protein is Proline--tRNA ligase of Mycobacterium avium (strain 104).